The chain runs to 382 residues: Cell division protein FtsZ (382 aa).

GTP-binding positions include 21 to 25, 108 to 110, Glu139, Arg143, and Asp187; these read GGGNN and GTG. The disordered stretch occupies residues 320-382; the sequence is KDVTKPQRPS…TFLRNRNKRG (63 aa). Residues 326-341 show a composition bias toward polar residues; sequence QRPSLNQSIKTHNQSV. Residues 342 to 351 are compositionally biased toward basic and acidic residues; it reads PKREPKREEP. Over residues 352–365 the composition is skewed to polar residues; sequence QQQNTVSRHTSQPA.

Belongs to the FtsZ family. Homodimer. Polymerizes to form a dynamic ring structure in a strictly GTP-dependent manner. Interacts directly with several other division proteins. Interacts with FtsA. Interacts with Phi29 DNA replication protein 1. Interacts with the cell division inhibitor MciZ.

It localises to the cytoplasm. During sporulation, is negatively regulated by MciZ, which binds to FtsZ and inhibits its polymerization and the formation of the Z ring. Its function is as follows. Essential cell division protein that forms a contractile ring structure (Z ring) at the future cell division site. The regulation of the ring assembly controls the timing and the location of cell division. One of the functions of the FtsZ ring is to recruit other cell division proteins to the septum to produce a new cell wall between the dividing cells. Binds GTP and shows GTPase activity. The sequence is that of Cell division protein FtsZ from Bacillus subtilis (strain 168).